We begin with the raw amino-acid sequence, 391 residues long: MKFLDQAKIFVKSGDGGNGCVAFRREKNIEFGGPDGGHGGRGADVIVEAVPNLNTLIDFRYQQHFKAARGRDGSGDNRTGKSGEATIIKVPVGTQIFEDDRKTLIADLSRPGQRVRLAKGGDGGFGNAHYKSSTNQAPRRADPGWPGQEIWVWLRLKLIADAGLIGLPNAGKSTLLAAVTRARPKIADYPFTTLHPNLGVVHQDAREFIIADIPGLIEGAHEGAGLGTRFLGHVERCAVLLHMIDATQDDVAGAWRTVRAELKGHGQGLDEKSEIVGLSKIDALPPEDIAAKIAELSEACGAPVMAFSAISGKGLADVLRVMATHVDEARALRHARGEAEGDASDEAMRDVTGIDHGYNRPSAVVDWEDAPFDDDDDDDGDESGDKGQWTR.

The 159-residue stretch at M1 to I159 folds into the Obg domain. An OBG-type G domain is found at A160–D327. GTP is bound by residues G166–S173, F191–H195, D212–G215, S279–D282, and S308–I310. Mg(2+) is bound by residues S173 and T193. A disordered region spans residues T352–R391. Positions D366–E382 are enriched in acidic residues.

It belongs to the TRAFAC class OBG-HflX-like GTPase superfamily. OBG GTPase family. In terms of assembly, monomer. The cofactor is Mg(2+).

Its subcellular location is the cytoplasm. Its function is as follows. An essential GTPase which binds GTP, GDP and possibly (p)ppGpp with moderate affinity, with high nucleotide exchange rates and a fairly low GTP hydrolysis rate. Plays a role in control of the cell cycle, stress response, ribosome biogenesis and in those bacteria that undergo differentiation, in morphogenesis control. This chain is GTPase Obg, found in Rhodospirillum rubrum (strain ATCC 11170 / ATH 1.1.1 / DSM 467 / LMG 4362 / NCIMB 8255 / S1).